Reading from the N-terminus, the 57-residue chain is Large ribosomal subunit protein bL33 (57 aa).

This sequence belongs to the bacterial ribosomal protein bL33 family.

This is Large ribosomal subunit protein bL33 from Shewanella sp. (strain MR-4).